A 266-amino-acid chain; its full sequence is Tryptophan synthase alpha chain (266 aa).

Active-site proton acceptor residues include glutamate 49 and aspartate 60.

It belongs to the TrpA family. In terms of assembly, tetramer of two alpha and two beta chains.

The enzyme catalyses (1S,2R)-1-C-(indol-3-yl)glycerol 3-phosphate + L-serine = D-glyceraldehyde 3-phosphate + L-tryptophan + H2O. The protein operates within amino-acid biosynthesis; L-tryptophan biosynthesis; L-tryptophan from chorismate: step 5/5. Functionally, the alpha subunit is responsible for the aldol cleavage of indoleglycerol phosphate to indole and glyceraldehyde 3-phosphate. The chain is Tryptophan synthase alpha chain from Shewanella amazonensis (strain ATCC BAA-1098 / SB2B).